Consider the following 924-residue polypeptide: 104 kDa microneme/rhoptry antigen (924 aa).

Residues 1–19 form the signal peptide; that stretch reads MKFLILLFNILCLFPVLAA. The disordered stretch occupies residues 490 to 907; the sequence is SKKKLAPITE…KKPKKPDSAY (418 aa). Composition is skewed to basic and acidic residues over residues 522-532 and 573-588; these read PGDKEGSEGHK and GPKD…EPRK. Residues 592-617 show a composition bias toward low complexity; sequence PRTASPTRRPSPKLPQLSKLPKSTSP. Basic and acidic residues predominate over residues 653–673; that stretch reads SFKEKFYDDYSKAASRSKETK. Positions 724-736 are enriched in low complexity; sequence SPSTSPSEFFTPP. 3 stretches are compositionally biased toward basic and acidic residues: residues 737–747, 770–783, and 816–825; these read ESKRTRFHETP, KSPD…RSPS, and DPGRMAKDAS. A compositionally biased stretch (acidic residues) spans 857–867; sequence DDEGTEADDEE. The span at 868–878 shows a compositional bias: basic and acidic residues; that stretch reads THPPEERQKTE. The segment covering 879–901 has biased composition (basic residues); that stretch reads VRRRRPPKKPSKSPRPSKPKKPK. Residue aspartate 904 is the site of GPI-anchor amidated aspartate attachment. Residues 905–924 constitute a propeptide, removed in mature form; sequence SAYIPSILAILVVSLIVGIL.

The protein resides in the cell membrane. The protein is 104 kDa microneme/rhoptry antigen of Theileria parva (East coast fever infection agent).